The chain runs to 107 residues: Phosphoribosyl-ATP pyrophosphatase (107 aa).

Belongs to the PRA-PH family.

The protein resides in the cytoplasm. The catalysed reaction is 1-(5-phospho-beta-D-ribosyl)-ATP + H2O = 1-(5-phospho-beta-D-ribosyl)-5'-AMP + diphosphate + H(+). The protein operates within amino-acid biosynthesis; L-histidine biosynthesis; L-histidine from 5-phospho-alpha-D-ribose 1-diphosphate: step 2/9. In Bacillus cereus (strain Q1), this protein is Phosphoribosyl-ATP pyrophosphatase.